The sequence spans 275 residues: Lycopene elongase/hydratase (275 aa).

The next 9 membrane-spanning stretches (helical) occupy residues 13-33 (FWLY…TTVG), 38-58 (APAV…LYGI), 84-104 (AAVA…AAPL), 107-127 (EAWP…APPL), 134-154 (VLDS…YAGV), 160-180 (PLLA…FSAI), 203-223 (ALAY…LVDV), 225-245 (FGLL…LQVA), and 253-273 (YPAV…WGVV).

It belongs to the UbiA prenyltransferase family.

The protein resides in the cell membrane. The catalysed reaction is all-trans-lycopene + dimethylallyl diphosphate + H2O = dihydroisopentenyldehydrorhodopin + diphosphate. It carries out the reaction isopentenyldehydrorhodopin + dimethylallyl diphosphate + H2O = dihydrobisanhydrobacterioruberin + diphosphate. The protein operates within carotenoid biosynthesis. With respect to regulation, inhibited by bacterioopsin. In terms of biological role, involved in the biosynthesis of the acyclic C50 carotenoid bacterioruberin (BR). Acts as a bifunctional elongase/hydratase that catalyzes the elongation of lycopene by attaching a C(5) isoprene unit at C-2, as well as the hydroxylation of the previous end of the molecule. The enzyme acts at both ends of the substrate, and catalyzes the conversion of lycopene to the C(45) intermediate dihydroisopentenyldehydrorhodopin (DH-IDR) and the conversion of isopentenyldehydrorhodopin (IDR) to the C(50) carotenoid dihydrobisanhydrobacterioruberin (DH-BABR). Can also catalyze the conversion of lycopene to tetrahydrobisanhydrobacterioruberin (TH-BABR). This is Lycopene elongase/hydratase from Halobacterium salinarum (strain ATCC 700922 / JCM 11081 / NRC-1) (Halobacterium halobium).